Reading from the N-terminus, the 432-residue chain is Adenylosuccinate synthetase (432 aa).

Residues 13-19 (GDEGKGK) and 41-43 (GHT) contribute to the GTP site. The active-site Proton acceptor is aspartate 14. Residues aspartate 14 and glycine 41 each coordinate Mg(2+). Residues 14–17 (DEGK), 39–42 (NAGH), threonine 130, arginine 144, glutamine 225, threonine 240, and arginine 304 contribute to the IMP site. The active-site Proton donor is the histidine 42. 300–306 (AVTGRPR) serves as a coordination point for substrate. Residues arginine 306, 332 to 334 (KLD), and 415 to 417 (STG) contribute to the GTP site.

Belongs to the adenylosuccinate synthetase family. In terms of assembly, homodimer. Requires Mg(2+) as cofactor.

It localises to the cytoplasm. The enzyme catalyses IMP + L-aspartate + GTP = N(6)-(1,2-dicarboxyethyl)-AMP + GDP + phosphate + 2 H(+). It participates in purine metabolism; AMP biosynthesis via de novo pathway; AMP from IMP: step 1/2. Plays an important role in the de novo pathway of purine nucleotide biosynthesis. Catalyzes the first committed step in the biosynthesis of AMP from IMP. This Haemophilus influenzae (strain ATCC 51907 / DSM 11121 / KW20 / Rd) protein is Adenylosuccinate synthetase.